The chain runs to 711 residues: Protein Smaug homolog 1 (711 aa).

Serine 168 is subject to Phosphoserine. The interval 278-323 (ARGPQCLPSDHAPLSPQSSVASSGSGGSEHLEDQTTARNTFQEEGS) is disordered. In terms of domain architecture, SAM spans 323–396 (SGMKDVPAWL…LKSLERDIIE (74 aa)). At serine 420 the chain carries Phosphoserine. Disordered regions lie at residues 422–448 (STTPEVRCREPSLMESPSPDCKDSAAA) and 565–588 (NRGFGQSNSLPTASSVGSGMGRRN). Threonine 424 carries the phosphothreonine modification. An Omega-N-methylarginine modification is found at arginine 566. The segment covering 568–581 (FGQSNSLPTASSVG) has biased composition (polar residues). At serine 573 the chain carries Phosphoserine.

This sequence belongs to the SMAUG family. Expressed in brain (at protein level).

It is found in the cytoplasm. The protein resides in the cell projection. It localises to the dendrite. Its subcellular location is the synapse. The protein localises to the synaptosome. Acts as a translational repressor of SRE-containing messengers. The chain is Protein Smaug homolog 1 (Samd4a) from Mus musculus (Mouse).